The chain runs to 219 residues: MKFKDFFVIGTDTDVGKTYVSTLLYKALKKYNFQYYKPIQSGCFLKDGKLTAPDVDFLTKFVGIDYDDSMVTYTLKEEVSPHLASEMEGIRIEIENVKRHYEDLKKKHSNILVEGAGGLYVPLIRDIFYIYDLIKLFNLPVVLVCGTKVGAINHTMLTLNALDTMGIKLHGLVFNNYRGQFFEDDNIKVVLALSKIKNYLIIKNGQKEISDKEIEKFFN.

14–19 (DVGKTY) contributes to the ATP binding site. Thr-18 contributes to the Mg(2+) binding site. Residue Lys-37 is part of the active site. Position 41 (Ser-41) interacts with substrate. Residues Asp-54, 114–117 (EGAG), and 175–176 (NN) contribute to the ATP site. Positions 54 and 114 each coordinate Mg(2+).

Belongs to the dethiobiotin synthetase family. As to quaternary structure, homodimer. The cofactor is Mg(2+).

The protein resides in the cytoplasm. The catalysed reaction is (7R,8S)-7,8-diammoniononanoate + CO2 + ATP = (4R,5S)-dethiobiotin + ADP + phosphate + 3 H(+). It participates in cofactor biosynthesis; biotin biosynthesis; biotin from 7,8-diaminononanoate: step 1/2. In terms of biological role, catalyzes a mechanistically unusual reaction, the ATP-dependent insertion of CO2 between the N7 and N8 nitrogen atoms of 7,8-diaminopelargonic acid (DAPA, also called 7,8-diammoniononanoate) to form a ureido ring. The chain is ATP-dependent dethiobiotin synthetase BioD from Fusobacterium nucleatum subsp. nucleatum (strain ATCC 25586 / DSM 15643 / BCRC 10681 / CIP 101130 / JCM 8532 / KCTC 2640 / LMG 13131 / VPI 4355).